We begin with the raw amino-acid sequence, 215 residues long: Nucleoside triphosphate pyrophosphatase (215 aa).

Residue Asp77 is the Proton acceptor of the active site.

Belongs to the Maf family. It depends on a divalent metal cation as a cofactor.

Its subcellular location is the cytoplasm. It carries out the reaction a ribonucleoside 5'-triphosphate + H2O = a ribonucleoside 5'-phosphate + diphosphate + H(+). The enzyme catalyses a 2'-deoxyribonucleoside 5'-triphosphate + H2O = a 2'-deoxyribonucleoside 5'-phosphate + diphosphate + H(+). In terms of biological role, nucleoside triphosphate pyrophosphatase. May have a dual role in cell division arrest and in preventing the incorporation of modified nucleotides into cellular nucleic acids. The protein is Nucleoside triphosphate pyrophosphatase of Rickettsia africae (strain ESF-5).